A 394-amino-acid polypeptide reads, in one-letter code: Elongation factor Tu 2 (394 aa).

The tr-type G domain occupies 10-204 (KPHVNVGTIG…YLDSYIPEPE (195 aa)). A G1 region spans residues 19–26 (GHVDHGKT). 19-26 (GHVDHGKT) is a GTP binding site. Residue T26 participates in Mg(2+) binding. Residues 60–64 (GITIN) form a G2 region. Residues 81–84 (DCPG) form a G3 region. Residues 81–85 (DCPGH) and 136–139 (NKCD) each bind GTP. A G4 region spans residues 136–139 (NKCD). Residues 174–176 (SAL) form a G5 region.

This sequence belongs to the TRAFAC class translation factor GTPase superfamily. Classic translation factor GTPase family. EF-Tu/EF-1A subfamily. As to quaternary structure, monomer.

The protein localises to the cytoplasm. It catalyses the reaction GTP + H2O = GDP + phosphate + H(+). GTP hydrolase that promotes the GTP-dependent binding of aminoacyl-tRNA to the A-site of ribosomes during protein biosynthesis. The polypeptide is Elongation factor Tu 2 (Yersinia pseudotuberculosis serotype O:1b (strain IP 31758)).